A 201-amino-acid polypeptide reads, in one-letter code: Ras-related protein Rab-1B (201 aa).

At Met-1 the chain carries N-acetylmethionine. GTP is bound by residues Ser-17, Gly-18, Val-19, Gly-20, Lys-21, Ser-22, Cys-23, Tyr-33, Thr-34, Glu-35, Ser-36, Ser-39, and Thr-40. Ser-22 contacts Mg(2+). The Switch 1 signature appears at 30 to 45; sequence DDTYTESYISTIGVDF. 2 residues coordinate Mg(2+): Thr-40 and Asp-63. A switch 2 region; Required for interaction with REP1/CHM region spans residues 64–83; it reads TAGQERFRTITSSYYRGAHG. Residues 65-80 carry the Switch 2 motif; it reads AGQERFRTITSSYYRG. GTP is bound by residues Gly-66, Asn-121, Lys-122, Asp-124, Ser-151, Ala-152, and Lys-153. The segment at 173 to 201 is disordered; it reads MGPGAASGGERPNLKIDSTPVKQAGGGCC. Residues Cys-200 and Cys-201 are each lipidated (S-geranylgeranyl cysteine). Cys-201 bears the Cysteine methyl ester mark.

It belongs to the small GTPase superfamily. Rab family. As to quaternary structure, interacts with MICAL1 and MICAL2. Interacts (in GTP-bound form) with MICALCL, MICAL1 and MILCAL3. Interacts with GDI1; the interaction requires the GDP-bound state. Interacts with CHM/REP1; the interaction requires the GDP-bound form and is necessary for prenylation by GGTase II. Interacts with RabGAP TBC1D20. Interacts (in GDP-bound form) with lipid phosphatase MTMR6 (via GRAM domain); the interaction regulates MTMR6 recruitment to the endoplasmic reticulum-Golgi intermediate compartment. Interacts (in GDP-bound form) with lipid phosphatase MTMR7. Requires Mg(2+) as cofactor. In terms of processing, prenylated; by GGTase II, only after interaction of the substrate with Rab escort protein 1 (REP1).

The protein resides in the cytoplasm. It localises to the membrane. Its subcellular location is the preautophagosomal structure membrane. The protein localises to the perinuclear region. It carries out the reaction GTP + H2O = GDP + phosphate + H(+). Regulated by guanine nucleotide exchange factors (GEFs) which promote the exchange of bound GDP for free GTP. Regulated by GTPase activating proteins (GAPs) including TBC1D20 which increases the GTP hydrolysis activity. Inhibited by GDP dissociation inhibitors (GDIs). The small GTPases Rab are key regulators of intracellular membrane trafficking, from the formation of transport vesicles to their fusion with membranes. Rabs cycle between an inactive GDP-bound form and an active GTP-bound form that is able to recruit to membranes different set of downstream effectors directly responsible for vesicle formation, movement, tethering and fusion. Plays a role in the initial events of the autophagic vacuole development which take place at specialized regions of the endoplasmic reticulum. Regulates vesicular transport between the endoplasmic reticulum and successive Golgi compartments. Required to modulate the compacted morphology of the Golgi. Promotes the recruitment of lipid phosphatase MTMR6 to the endoplasmic reticulum-Golgi intermediate compartment. The chain is Ras-related protein Rab-1B (RAB1B) from Bos taurus (Bovine).